The chain runs to 112 residues: Divalent-cation tolerance protein CutA (112 aa).

Cu cation is bound by residues Cys-16, His-83, and His-84.

This sequence belongs to the CutA family. Homotrimer. Requires Cu cation as cofactor.

The protein resides in the cytoplasm. Its function is as follows. Involved in resistance toward heavy metals. This chain is Divalent-cation tolerance protein CutA, found in Shigella boydii serotype 18 (strain CDC 3083-94 / BS512).